A 234-amino-acid polypeptide reads, in one-letter code: Ribose-5-phosphate isomerase A (234 aa).

Substrate contacts are provided by residues 28–31, 83–86, and 96–99; these read TGST, DGAD, and KGGG. Residue Glu-105 is the Proton acceptor of the active site. A substrate-binding site is contributed by Lys-123.

The protein belongs to the ribose 5-phosphate isomerase family. Homodimer.

It carries out the reaction aldehydo-D-ribose 5-phosphate = D-ribulose 5-phosphate. The protein operates within carbohydrate degradation; pentose phosphate pathway; D-ribose 5-phosphate from D-ribulose 5-phosphate (non-oxidative stage): step 1/1. Its function is as follows. Catalyzes the reversible conversion of ribose-5-phosphate to ribulose 5-phosphate. In Bartonella quintana (strain Toulouse) (Rochalimaea quintana), this protein is Ribose-5-phosphate isomerase A.